A 444-amino-acid chain; its full sequence is ATP-dependent protease ATPase subunit HslU (444 aa).

ATP contacts are provided by residues isoleucine 20, 62 to 67, aspartate 257, glutamate 322, and arginine 394; that span reads GVGKTE.

This sequence belongs to the ClpX chaperone family. HslU subfamily. A double ring-shaped homohexamer of HslV is capped on each side by a ring-shaped HslU homohexamer. The assembly of the HslU/HslV complex is dependent on binding of ATP.

The protein localises to the cytoplasm. ATPase subunit of a proteasome-like degradation complex; this subunit has chaperone activity. The binding of ATP and its subsequent hydrolysis by HslU are essential for unfolding of protein substrates subsequently hydrolyzed by HslV. HslU recognizes the N-terminal part of its protein substrates and unfolds these before they are guided to HslV for hydrolysis. This Bordetella avium (strain 197N) protein is ATP-dependent protease ATPase subunit HslU.